A 310-amino-acid chain; its full sequence is Transcription factor RAX3 (310 aa).

HTH myb-type domains are found at residues Lys-9 to Leu-62 and Arg-63 to Leu-117. 2 DNA-binding regions (H-T-H motif) span residues Trp-38–Leu-62 and Trp-90–Leu-113.

Ubiquitous.

It localises to the nucleus. Transcription activator. Positively regulates axillary meristems (AMs) formation and development, especially during inflorescence. This is Transcription factor RAX3 (RAX3) from Arabidopsis thaliana (Mouse-ear cress).